A 135-amino-acid polypeptide reads, in one-letter code: Hemoglobin subunit beta-3 (135 aa).

A Globin domain is found at His2–Gln135. Heme b-binding residues include His57 and His81.

Belongs to the globin family. In terms of assembly, hb 3 is a heterotetramer of two alpha and two beta-3 chains. In terms of tissue distribution, red blood cells (at protein level).

Its function is as follows. Involved in oxygen transport from gills to the various peripheral tissues. The polypeptide is Hemoglobin subunit beta-3 (Somniosus microcephalus (Greenland sleeper shark)).